A 130-amino-acid polypeptide reads, in one-letter code: Probable pilin MJ0835.1 (130 aa).

Positions 1 to 14 are excised as a propeptide; sequence MNTMENKIIKSKKA. Positions 15 to 23 match the QXSXEXXXL motif; that stretch reads QVSLEFSFL.

Post-translationally, the N-terminus is cleaved by the prepilin peptidase EppA, which recognizes the class III signal sequence.

The protein localises to the secreted. It is found in the cell surface. The protein resides in the fimbrium. In Methanocaldococcus jannaschii (strain ATCC 43067 / DSM 2661 / JAL-1 / JCM 10045 / NBRC 100440) (Methanococcus jannaschii), this protein is Probable pilin MJ0835.1.